The chain runs to 842 residues: Elongation factor 2 (842 aa).

The region spanning 17–253 (SNVRNMSVIA…LWGENYFNPK (237 aa)) is the tr-type G domain. Residues 26–33 (AHVDHGKS), 104–108 (DSPGH), and 158–161 (NKVD) contribute to the GTP site. S568 carries the phosphoserine modification. T574 carries the phosphothreonine modification. Residue H699 is modified to Diphthamide.

The protein belongs to the TRAFAC class translation factor GTPase superfamily. Classic translation factor GTPase family. EF-G/EF-2 subfamily.

The protein localises to the cytoplasm. Catalyzes the GTP-dependent ribosomal translocation step during translation elongation. During this step, the ribosome changes from the pre-translocational (PRE) to the post-translocational (POST) state as the newly formed A-site-bound peptidyl-tRNA and P-site-bound deacylated tRNA move to the P and E sites, respectively. Catalyzes the coordinated movement of the two tRNA molecules, the mRNA and conformational changes in the ribosome. This Schizosaccharomyces pombe (strain 972 / ATCC 24843) (Fission yeast) protein is Elongation factor 2 (eft201).